A 308-amino-acid chain; its full sequence is Urease subunit beta (308 aa).

Residues 131–308 form the Urease domain; that stretch reads GGIDTHIHFI…STNPTIPFTK (178 aa). His-136, His-138, Lys-219, His-248, and His-274 together coordinate Ni(2+). Lys-219 carries the post-translational modification N6-carboxylysine.

It belongs to the metallo-dependent hydrolases superfamily. Urease alpha subunit family. As to quaternary structure, heterohexamer of 3 UreA (alpha) and 3 UreB (beta) subunits. Ni cation serves as cofactor. Post-translationally, carboxylation allows a single lysine to coordinate two nickel ions.

It localises to the cytoplasm. The catalysed reaction is urea + 2 H2O + H(+) = hydrogencarbonate + 2 NH4(+). It functions in the pathway nitrogen metabolism; urea degradation; CO(2) and NH(3) from urea (urease route): step 1/1. This Helicobacter mustelae protein is Urease subunit beta (ureB).